Here is a 350-residue protein sequence, read N- to C-terminus: Aldo-keto reductase 1B (350 aa).

Tyr84 serves as the catalytic Proton donor. His146 contributes to the substrate binding site. 244–306 (SPLGSPNRPW…SVTKDRIESN (63 aa)) provides a ligand contact to NADP(+).

Belongs to the aldo/keto reductase family.

The protein localises to the cytoplasm. It catalyses the reaction an alditol + NADP(+) = an aldose + NADPH + H(+). It carries out the reaction all-trans-retinol + NADP(+) = all-trans-retinal + NADPH + H(+). The catalysed reaction is 9-cis-retinol + NADP(+) = 9-cis-retinal + NADPH + H(+). The enzyme catalyses 13-cis-retinol + NADP(+) = 13-cis-retinal + NADPH + H(+). It catalyses the reaction glycerol + NADP(+) = D-glyceraldehyde + NADPH + H(+). It carries out the reaction glycerol + NADP(+) = L-glyceraldehyde + NADPH + H(+). The catalysed reaction is prenol + NADP(+) = 3-methyl-2-butenal + NADPH + H(+). The enzyme catalyses (E)-hex-2-en-1-ol + NADP(+) = (E)-hex-2-enal + NADPH + H(+). It catalyses the reaction (E,E)-2,4-hexadien-1-ol + NADP(+) = (E,E)-2,4-hexadienal + NADPH + H(+). It carries out the reaction a 4-hydroxynonen-1-ol + NADP(+) = a 4-hydroxynonenal + NADPH + H(+). The catalysed reaction is prostaglandin F2alpha + NADP(+) = prostaglandin H2 + NADPH + H(+). The enzyme catalyses allyl alcohol + NADP(+) = acrolein + NADPH + H(+). It catalyses the reaction pyridine 3-methanol + NADP(+) = pyridine-3-carbaldehyde + NADPH + H(+). It carries out the reaction 1-hexadecanoyl-2-(5-oxopentanoyl)-sn-glycero-3-phosphocholine + NADPH + H(+) = 1-hexadecanoyl-2-(5-hydroxypentanoyl)-sn-glycero-3-phosphocholine + NADP(+). The catalysed reaction is 1-hexadecanoyl-2-(7-oxoheptanoyl)-sn-glycero-3-phosphocholine + NADPH + H(+) = 1-hexadecanoyl-2-(7-hydroxyheptanoyl)-sn-glycero-3-phosphocholine + NADP(+). The enzyme catalyses 1-hexadecanoyl-2-(9-oxononanoyl)-sn-glycero-3-phosphocholine + NADPH + H(+) = 1-hexadecanoyl-2-(9-hydroxynonanoyl)-sn-glycero-3-phosphocholine + NADP(+). It catalyses the reaction 1-hexadecanoyl-2-(5-oxopentanoyl)-sn-glycero-3-phosphoethanolamine + NADPH + H(+) = 1-hexadecanoyl-2-(5-hydroxypentanoyl)-sn-glycero-3-phosphoethanolamine + NADP(+). Its function is as follows. Catalyzes the NADPH-dependent reduction of a wide variety of carbonyl-containing compounds to their corresponding alcohols. Displays enzymatic activity towards endogenous metabolites such as aromatic and aliphatic aldehydes, ketones, monosaccharides, bile acids and xenobiotics substrates. Key enzyme in the polyol pathway, catalyzes reduction of glucose to sorbitol during hyperglycemia. Reduces steroids and their derivatives and prostaglandins. Through production of prostaglandin F2alpha may regulate the activity of non-muscle myosin II in an autocrine or paracrine fashion; influences border cell and nurse cell stiffness to facilitate border cell cluster migration. Also regulates the cell surface localization of integrins in an autocrine or paracrine fashion; influences border cell adhesion to maintain border cell cluster morphology. In hemocytes, probably contributes to production of sugar alcohols in the hemolymph, which act as alarmins involved in gut-fat body innate immunological communication (GFIC); leads to activation of the imd/Relish signaling pathway in the fat body. The protein is Aldo-keto reductase 1B of Drosophila melanogaster (Fruit fly).